A 418-amino-acid chain; its full sequence is Actin-related protein 3 (418 aa).

Ala-2 carries the N-acetylalanine modification. 4 positions are modified to N6-acetyllysine: Lys-240, Lys-244, Lys-251, and Lys-254.

The protein belongs to the actin family. ARP3 subfamily. As to quaternary structure, component of the Arp2/3 complex composed of ACTR2/ARP2, ACTR3/ARP3, ARPC1B/p41-ARC, ARPC2/p34-ARC, ARPC3/p21-ARC, ARPC4/p20-ARC and ARPC5/p16-ARC. Interacts with WHDC1. Interacts weakly with MEFV. Interacts with AVIL.

It localises to the cytoplasm. It is found in the cytoskeleton. Its subcellular location is the cell projection. The protein resides in the nucleus. Functionally, ATP-binding component of the Arp2/3 complex, a multiprotein complex that mediates actin polymerization upon stimulation by nucleation-promoting factor (NPF). The Arp2/3 complex mediates the formation of branched actin networks in the cytoplasm, providing the force for cell motility. Seems to contact the pointed end of the daughter actin filament. In podocytes, required for the formation of lamellipodia downstream of AVIL and PLCE1 regulation. In addition to its role in the cytoplasmic cytoskeleton, the Arp2/3 complex also promotes actin polymerization in the nucleus, thereby regulating gene transcription and repair of damaged DNA. The Arp2/3 complex promotes homologous recombination (HR) repair in response to DNA damage by promoting nuclear actin polymerization, leading to drive motility of double-strand breaks (DSBs). Plays a role in ciliogenesis. The chain is Actin-related protein 3 (ACTR3) from Bos taurus (Bovine).